A 146-amino-acid polypeptide reads, in one-letter code: 3-hydroxyacyl-[acyl-carrier-protein] dehydratase FabZ (146 aa).

The active site involves histidine 49.

Belongs to the thioester dehydratase family. FabZ subfamily.

The protein localises to the cytoplasm. It catalyses the reaction a (3R)-hydroxyacyl-[ACP] = a (2E)-enoyl-[ACP] + H2O. Involved in unsaturated fatty acids biosynthesis. Catalyzes the dehydration of short chain beta-hydroxyacyl-ACPs and long chain saturated and unsaturated beta-hydroxyacyl-ACPs. This Pseudomonas fluorescens (strain ATCC BAA-477 / NRRL B-23932 / Pf-5) protein is 3-hydroxyacyl-[acyl-carrier-protein] dehydratase FabZ.